The chain runs to 811 residues: Probable disease resistance protein At5g04720 (811 aa).

The region spanning 1–147 (MADIIGGEVV…KVDSLNEKLG (147 aa)) is the RPW8 domain. 2 NB-ARC domains span residues 180-242 (VGLD…VSQS) and 312-437 (TYDV…NVLV). 207–214 (GMSGSGKT) contributes to the ATP binding site. LRR repeat units follow at residues 650–674 (FPKL…ICGI), 676–699 (SLNS…SKLK), 700–722 (ALQL…ICEL), 724–746 (RLKY…IGKV), and 748–769 (TLEK…VVLL).

Belongs to the disease resistance NB-LRR family.

Functionally, probable disease resistance protein. The protein is Probable disease resistance protein At5g04720 of Arabidopsis thaliana (Mouse-ear cress).